We begin with the raw amino-acid sequence, 179 residues long: CASP-like protein 1F1 (179 aa).

Residues 1 to 16 (MENVEDKYNSPLKSQK) are Cytoplasmic-facing. A helical transmembrane segment spans residues 17 to 37 (LFIGAQICLRIVTIGATLAAT). Residues 38–65 (WIMVTDKQSITFGDFVMVAKYNYSSAFK) are Extracellular-facing. The N-linked (GlcNAc...) asparagine glycan is linked to Asn59. The helical transmembrane segment at 66 to 86 (FFVLANVIACACSVVSLLFLC) threads the bilayer. The Cytoplasmic segment spans residues 87–105 (ALGRYSSNPGHVFLLFLHD). A helical transmembrane segment spans residues 106–126 (LLMMSLVLAGCSAATAIGFLG). Over 127 to 150 (KYGNTKSGWMPICDQFGQFCNRGT) the chain is Extracellular. Residues 151–171 (ISMMLSYLSMVCLLILTVTSA) traverse the membrane as a helical segment. Residues 172-179 (NKSRQIHV) are Cytoplasmic-facing.

It belongs to the Casparian strip membrane proteins (CASP) family. In terms of assembly, homodimer and heterodimers.

The protein localises to the cell membrane. The sequence is that of CASP-like protein 1F1 from Ricinus communis (Castor bean).